A 565-amino-acid chain; its full sequence is Protein NRT1/ PTR FAMILY 5.15 (565 aa).

2 helical membrane passes run 49-67 and 80-100; these read FAYFGIACNLITYLTGPLG and WSGTASILPILGAFVADAYLG. The residue at position 104 (threonine 104) is a Phosphothreonine. A run of 10 helical transmembrane segments spans residues 110 to 130, 142 to 162, 189 to 209, 217 to 237, 331 to 351, 368 to 388, 409 to 429, 454 to 474, 490 to 510, and 534 to 554; these read LIYILGLGLLTLSASLIIMGL, SIWVNTLFFCSLYLVAIGQGG, FFNWWFLSLSAGISISIIVVA, WAFGFGIPCLFMVMALAIFLL, IPIWITYVVSTIPYAQYITFF, IPAASLLSFVGVSILISVPLY, LQRIGAGMVLSVFNMMLAALV, IWWFVPQYLLLGMIDLFSMVG, IGLSLSLSAMGLSSFLSGFLI, and YFYWLLAAFTAIAFFAFLFIS.

It belongs to the major facilitator superfamily. Proton-dependent oligopeptide transporter (POT/PTR) (TC 2.A.17) family. As to expression, expressed in shoots, roots and leaves.

Its subcellular location is the membrane. This chain is Protein NRT1/ PTR FAMILY 5.15 (NPF5.15), found in Arabidopsis thaliana (Mouse-ear cress).